The following is a 102-amino-acid chain: Large ribosomal subunit protein uL24 (102 aa).

The protein belongs to the universal ribosomal protein uL24 family. As to quaternary structure, part of the 50S ribosomal subunit.

In terms of biological role, one of two assembly initiator proteins, it binds directly to the 5'-end of the 23S rRNA, where it nucleates assembly of the 50S subunit. Its function is as follows. One of the proteins that surrounds the polypeptide exit tunnel on the outside of the subunit. The sequence is that of Large ribosomal subunit protein uL24 from Polynucleobacter asymbioticus (strain DSM 18221 / CIP 109841 / QLW-P1DMWA-1) (Polynucleobacter necessarius subsp. asymbioticus).